The following is a 368-amino-acid chain: CST complex subunit STN1 (368 aa).

The interval 2 to 192 is interaction with CTC1; the sequence is AVSLGDDDAD…KCYDQPFKMP (191 aa). Residues 58–162 constitute a DNA-binding region (OB); that stretch reads VDVLGIVVYK…EIKATSFYKV (105 aa). Winged helix-turn-helix (wHTH) regions lie at residues 201–295 and 296–368; these read AGGS…NVTE and QDKD…YIVL.

Belongs to the CTC1 family. Component of the CST complex.

It localises to the nucleus. The protein resides in the chromosome. The protein localises to the telomere. Component of the CST complex proposed to act as a specialized replication factor promoting DNA replication under conditions of replication stress or natural replication barriers such as the telomere duplex. The CST complex binds single-stranded DNA with high affinity in a sequence-independent manner, while isolated subunits bind DNA with low affinity by themselves. Initially the CST complex has been proposed to protect telomeres from DNA degradation. However, the CST complex has been shown to be involved in several aspects of telomere replication. This chain is CST complex subunit STN1, found in Danio rerio (Zebrafish).